The following is a 301-amino-acid chain: Acetyl-coenzyme A carboxylase carboxyl transferase subunit beta (301 aa).

Residues 25–294 (LWIKCPETGE…SAANDMNSGA (270 aa)) enclose the CoA carboxyltransferase N-terminal domain.

This sequence belongs to the AccD/PCCB family. As to quaternary structure, acetyl-CoA carboxylase is a heterohexamer composed of biotin carboxyl carrier protein (AccB), biotin carboxylase (AccC) and two subunits each of ACCase subunit alpha (AccA) and ACCase subunit beta (AccD).

The protein localises to the cytoplasm. It carries out the reaction N(6)-carboxybiotinyl-L-lysyl-[protein] + acetyl-CoA = N(6)-biotinyl-L-lysyl-[protein] + malonyl-CoA. The protein operates within lipid metabolism; malonyl-CoA biosynthesis; malonyl-CoA from acetyl-CoA: step 1/1. Its function is as follows. Component of the acetyl coenzyme A carboxylase (ACC) complex. Biotin carboxylase (BC) catalyzes the carboxylation of biotin on its carrier protein (BCCP) and then the CO(2) group is transferred by the transcarboxylase to acetyl-CoA to form malonyl-CoA. This chain is Acetyl-coenzyme A carboxylase carboxyl transferase subunit beta, found in Rhizobium leguminosarum bv. trifolii (strain WSM1325).